The primary structure comprises 455 residues: Bifunctional protein GlmU (455 aa).

A pyrophosphorylase region spans residues 1–226; that stretch reads MSLDIVILAA…AMEVQGANDR (226 aa). UDP-N-acetyl-alpha-D-glucosamine-binding positions include 8 to 11, lysine 22, glutamine 73, 78 to 79, 99 to 101, glycine 136, glutamate 151, asparagine 166, and asparagine 224; these read LAAG, GT, and YGD. Mg(2+) is bound at residue aspartate 101. Asparagine 224 lines the Mg(2+) pocket. Residues 227–247 are linker; it reads KQLSELERHYQLREARRLMAA. The segment at 248–455 is N-acetyltransferase; it reads GVTLRDPSRF…WKRPVKITKD (208 aa). Arginine 330 and lysine 348 together coordinate UDP-N-acetyl-alpha-D-glucosamine. The active-site Proton acceptor is the histidine 360. 2 residues coordinate UDP-N-acetyl-alpha-D-glucosamine: tyrosine 363 and asparagine 374. Acetyl-CoA contacts are provided by residues alanine 377, 383-384, serine 402, alanine 420, and arginine 437; that span reads NY.

It in the N-terminal section; belongs to the N-acetylglucosamine-1-phosphate uridyltransferase family. The protein in the C-terminal section; belongs to the transferase hexapeptide repeat family. As to quaternary structure, homotrimer. It depends on Mg(2+) as a cofactor.

The protein localises to the cytoplasm. It catalyses the reaction alpha-D-glucosamine 1-phosphate + acetyl-CoA = N-acetyl-alpha-D-glucosamine 1-phosphate + CoA + H(+). The enzyme catalyses N-acetyl-alpha-D-glucosamine 1-phosphate + UTP + H(+) = UDP-N-acetyl-alpha-D-glucosamine + diphosphate. It participates in nucleotide-sugar biosynthesis; UDP-N-acetyl-alpha-D-glucosamine biosynthesis; N-acetyl-alpha-D-glucosamine 1-phosphate from alpha-D-glucosamine 6-phosphate (route II): step 2/2. It functions in the pathway nucleotide-sugar biosynthesis; UDP-N-acetyl-alpha-D-glucosamine biosynthesis; UDP-N-acetyl-alpha-D-glucosamine from N-acetyl-alpha-D-glucosamine 1-phosphate: step 1/1. Its pathway is bacterial outer membrane biogenesis; LPS lipid A biosynthesis. Functionally, catalyzes the last two sequential reactions in the de novo biosynthetic pathway for UDP-N-acetylglucosamine (UDP-GlcNAc). The C-terminal domain catalyzes the transfer of acetyl group from acetyl coenzyme A to glucosamine-1-phosphate (GlcN-1-P) to produce N-acetylglucosamine-1-phosphate (GlcNAc-1-P), which is converted into UDP-GlcNAc by the transfer of uridine 5-monophosphate (from uridine 5-triphosphate), a reaction catalyzed by the N-terminal domain. The protein is Bifunctional protein GlmU of Pseudomonas syringae pv. tomato (strain ATCC BAA-871 / DC3000).